The chain runs to 474 residues: Probable cytosol aminopeptidase (474 aa).

Mn(2+) contacts are provided by Lys-237 and Asp-242. Residue Lys-249 is part of the active site. Mn(2+) contacts are provided by Asp-260, Asp-319, and Glu-321. Arg-323 is a catalytic residue.

It belongs to the peptidase M17 family. Mn(2+) serves as cofactor.

The protein localises to the cytoplasm. The catalysed reaction is Release of an N-terminal amino acid, Xaa-|-Yaa-, in which Xaa is preferably Leu, but may be other amino acids including Pro although not Arg or Lys, and Yaa may be Pro. Amino acid amides and methyl esters are also readily hydrolyzed, but rates on arylamides are exceedingly low.. It carries out the reaction Release of an N-terminal amino acid, preferentially leucine, but not glutamic or aspartic acids.. In terms of biological role, presumably involved in the processing and regular turnover of intracellular proteins. Catalyzes the removal of unsubstituted N-terminal amino acids from various peptides. The chain is Probable cytosol aminopeptidase from Helicobacter hepaticus (strain ATCC 51449 / 3B1).